The following is an 827-amino-acid chain: Periplasmic nitrate reductase (827 aa).

Residues 1 to 32 (MTLSRRAFIKQTAAATAASAAGVVLPGVDALA) constitute a signal peptide (tat-type signal). Residues 37-93 (LTWSKAPCRFCGTGCGVSVGVKNGKVVATQGDPQAEVNRGLNCVKGYFLSKIMYGQD) enclose the 4Fe-4S Mo/W bis-MGD-type domain. 4 residues coordinate [4Fe-4S] cluster: cysteine 44, cysteine 47, cysteine 51, and cysteine 79. Mo-bis(molybdopterin guanine dinucleotide) contacts are provided by residues lysine 81, glutamine 148, asparagine 173, cysteine 177, 241 to 245 (STFEH), 260 to 262 (QSD), methionine 371, glutamine 375, asparagine 481, 507 to 508 (SD), lysine 530, aspartate 557, and 717 to 726 (TGRVLEHWHS). Substrate is bound at residue tryptophan 793. Mo-bis(molybdopterin guanine dinucleotide)-binding residues include asparagine 801 and lysine 818.

This sequence belongs to the prokaryotic molybdopterin-containing oxidoreductase family. NasA/NapA/NarB subfamily. In terms of assembly, component of the periplasmic nitrate reductase NapAB complex composed of NapA and NapB. [4Fe-4S] cluster serves as cofactor. Requires Mo-bis(molybdopterin guanine dinucleotide) as cofactor. Post-translationally, predicted to be exported by the Tat system. The position of the signal peptide cleavage has not been experimentally proven.

The protein localises to the periplasm. It carries out the reaction 2 Fe(II)-[cytochrome] + nitrate + 2 H(+) = 2 Fe(III)-[cytochrome] + nitrite + H2O. Its function is as follows. Catalytic subunit of the periplasmic nitrate reductase complex NapAB. Receives electrons from NapB and catalyzes the reduction of nitrate to nitrite. This is Periplasmic nitrate reductase from Paraburkholderia xenovorans (strain LB400).